The primary structure comprises 281 residues: tRNA uridine(34) hydroxylase (281 aa).

A Rhodanese domain is found at 125-222 (AREDVKTIDT…YFLKTKNKDG (98 aa)). The active-site Cysteine persulfide intermediate is the Cys-182.

Belongs to the TrhO family.

The enzyme catalyses uridine(34) in tRNA + AH2 + O2 = 5-hydroxyuridine(34) in tRNA + A + H2O. Its function is as follows. Catalyzes oxygen-dependent 5-hydroxyuridine (ho5U) modification at position 34 in tRNAs. This Neorickettsia sennetsu (strain ATCC VR-367 / Miyayama) (Ehrlichia sennetsu) protein is tRNA uridine(34) hydroxylase.